The sequence spans 156 residues: SsrA-binding protein (156 aa).

The segment at 131–156 is disordered; the sequence is YDKRQTLREQQDKREALRVMRERNRG.

It belongs to the SmpB family.

It localises to the cytoplasm. Functionally, required for rescue of stalled ribosomes mediated by trans-translation. Binds to transfer-messenger RNA (tmRNA), required for stable association of tmRNA with ribosomes. tmRNA and SmpB together mimic tRNA shape, replacing the anticodon stem-loop with SmpB. tmRNA is encoded by the ssrA gene; the 2 termini fold to resemble tRNA(Ala) and it encodes a 'tag peptide', a short internal open reading frame. During trans-translation Ala-aminoacylated tmRNA acts like a tRNA, entering the A-site of stalled ribosomes, displacing the stalled mRNA. The ribosome then switches to translate the ORF on the tmRNA; the nascent peptide is terminated with the 'tag peptide' encoded by the tmRNA and targeted for degradation. The ribosome is freed to recommence translation, which seems to be the essential function of trans-translation. The sequence is that of SsrA-binding protein from Arthrobacter sp. (strain FB24).